The following is a 406-amino-acid chain: Tubby-like F-box protein 3 (406 aa).

Positions serine 50–serine 105 constitute an F-box domain.

It belongs to the TUB family. Ubiquitous at low levels. Not detected in mature siliques.

It is found in the cell membrane. The protein localises to the plastid. It localises to the nucleus. Its subcellular location is the nucleoplasm. The protein resides in the cytoplasm. Functionally, involved in abiotic stress signaling. Tethered to plasma membrane (PM) and probably bound to phosphatidylinositol 4,5-bisphosphate. Abiotic stresses (drought, salt, H(2)O(2)) trigger phospholipase C mediated PM dislogement and plastidial and nucleocytosolic relocation of TULP3. The protein is Tubby-like F-box protein 3 of Arabidopsis thaliana (Mouse-ear cress).